The following is an 805-amino-acid chain: Leucine--tRNA ligase (805 aa).

A 'HIGH' region motif is present at residues 40–51; that stretch reads PYPSGSGLHVGH. The 'KMSKS' region motif lies at 576–580; sequence KMSKS. K579 serves as a coordination point for ATP.

Belongs to the class-I aminoacyl-tRNA synthetase family.

The protein localises to the cytoplasm. The catalysed reaction is tRNA(Leu) + L-leucine + ATP = L-leucyl-tRNA(Leu) + AMP + diphosphate. This is Leucine--tRNA ligase from Chloroherpeton thalassium (strain ATCC 35110 / GB-78).